Here is a 624-residue protein sequence, read N- to C-terminus: DNA-directed RNA polymerase III subunit rpc-3 (624 aa).

Disordered regions lie at residues 229-260 (KRKLAQNGGASKRRKLAVGNETNGAPEEEEDL) and 373-418 (LAPK…ARMS). Over residues 385–403 (DDSDDDEEDGDYSDSDEEM) the composition is skewed to acidic residues. The leucine-zipper stretch occupies residues 551–572 (CYATMVHCLQVLEVRRQKDKDV).

It belongs to the RNA polymerase beta chain family. Component of the RNA polymerase III (Pol III) complex consisting of 17 subunits.

Its subcellular location is the nucleus. Its function is as follows. DNA-dependent RNA polymerase catalyzes the transcription of DNA into RNA using the four ribonucleoside triphosphates as substrates. Specific core component of RNA polymerase III which synthesizes small RNAs, such as 5S rRNA and tRNAs. In Neurospora crassa (strain ATCC 24698 / 74-OR23-1A / CBS 708.71 / DSM 1257 / FGSC 987), this protein is DNA-directed RNA polymerase III subunit rpc-3 (rpc-82).